The following is a 315-amino-acid chain: Small ribosomal subunit biogenesis GTPase RsgA (315 aa).

A CP-type G domain is found at 80–241 (LSKQTHIIAS…IIDTPGIKGF (162 aa)). Residues 129–132 (NKVD) and 183–191 (GHSGTGKST) contribute to the GTP site. Residues cysteine 265, cysteine 270, histidine 272, and cysteine 278 each contribute to the Zn(2+) site.

It belongs to the TRAFAC class YlqF/YawG GTPase family. RsgA subfamily. In terms of assembly, monomer. Associates with 30S ribosomal subunit, binds 16S rRNA. Zn(2+) serves as cofactor.

The protein localises to the cytoplasm. Functionally, one of several proteins that assist in the late maturation steps of the functional core of the 30S ribosomal subunit. Helps release RbfA from mature subunits. May play a role in the assembly of ribosomal proteins into the subunit. Circularly permuted GTPase that catalyzes slow GTP hydrolysis, GTPase activity is stimulated by the 30S ribosomal subunit. The sequence is that of Small ribosomal subunit biogenesis GTPase RsgA from Christiangramia forsetii (strain DSM 17595 / CGMCC 1.15422 / KT0803) (Gramella forsetii).